Consider the following 103-residue polypeptide: MIVTTTSGIQGKEIIEYIDIVNGEAIMGANIVRDLFASVRDVVGGRAGSYESKLKEARDIAMDEMKELAKQKGANAIVGVDVDYEVVRDGMLMVAVSGTAVRI.

The protein belongs to the UPF0145 family.

This is UPF0145 protein BCE33L0904 from Bacillus cereus (strain ZK / E33L).